A 361-amino-acid chain; its full sequence is D-alanine--D-alanine ligase (361 aa).

One can recognise an ATP-grasp domain in the interval K134–D344. Position 169–224 (A169–E224) interacts with ATP. Mg(2+) is bound by residues D297, E311, and N313.

Belongs to the D-alanine--D-alanine ligase family. Requires Mg(2+) as cofactor. The cofactor is Mn(2+).

It is found in the cytoplasm. The catalysed reaction is 2 D-alanine + ATP = D-alanyl-D-alanine + ADP + phosphate + H(+). It participates in cell wall biogenesis; peptidoglycan biosynthesis. Functionally, cell wall formation. This is D-alanine--D-alanine ligase from Lactobacillus johnsonii (strain CNCM I-12250 / La1 / NCC 533).